The sequence spans 74 residues: Large ribosomal subunit protein bL28 (74 aa).

This sequence belongs to the bacterial ribosomal protein bL28 family.

The sequence is that of Large ribosomal subunit protein bL28 from Buchnera aphidicola subsp. Baizongia pistaciae (strain Bp).